A 206-amino-acid chain; its full sequence is Ribosomal RNA small subunit methyltransferase G (206 aa).

S-adenosyl-L-methionine-binding positions include G73, L78, 124 to 125, and R139; that span reads VE.

Belongs to the methyltransferase superfamily. RNA methyltransferase RsmG family.

Its subcellular location is the cytoplasm. It catalyses the reaction guanosine(527) in 16S rRNA + S-adenosyl-L-methionine = N(7)-methylguanosine(527) in 16S rRNA + S-adenosyl-L-homocysteine. Functionally, specifically methylates the N7 position of guanine in position 527 of 16S rRNA. This chain is Ribosomal RNA small subunit methyltransferase G, found in Pectobacterium carotovorum subsp. carotovorum (strain PC1).